Here is a 417-residue protein sequence, read N- to C-terminus: D-amino acid dehydrogenase (417 aa).

An FAD-binding site is contributed by 3-17 (IVVLGGGVVGVTSAW).

It belongs to the DadA oxidoreductase family. FAD serves as cofactor.

The enzyme catalyses a D-alpha-amino acid + A + H2O = a 2-oxocarboxylate + AH2 + NH4(+). The protein operates within amino-acid degradation; D-alanine degradation; NH(3) and pyruvate from D-alanine: step 1/1. Its function is as follows. Oxidative deamination of D-amino acids. The protein is D-amino acid dehydrogenase of Aeromonas hydrophila subsp. hydrophila (strain ATCC 7966 / DSM 30187 / BCRC 13018 / CCUG 14551 / JCM 1027 / KCTC 2358 / NCIMB 9240 / NCTC 8049).